The sequence spans 369 residues: Adenosine 3'-phospho 5'-phosphosulfate transporter 2 (369 aa).

The N-linked (GlcNAc...) asparagine glycan is linked to asparagine 39. Helical transmembrane passes span leucine 46–leucine 66, tyrosine 79–leucine 99, methionine 115–leucine 135, proline 138–isoleucine 158, valine 168–isoleucine 188, and asparagine 191–glycine 211. Asparagine 222 carries an N-linked (GlcNAc...) asparagine glycan. The next 4 membrane-spanning stretches (helical) occupy residues isoleucine 235–alanine 255, glycine 266–leucine 285, leucine 292–alanine 314, and phenylalanine 317–tyrosine 337.

The protein belongs to the nucleotide-sugar transporter family. SLC35B subfamily.

It is found in the golgi apparatus membrane. It carries out the reaction 3'-phosphoadenylyl sulfate(in) + adenosine 3',5'-bisphosphate(out) = 3'-phosphoadenylyl sulfate(out) + adenosine 3',5'-bisphosphate(in). Probably functions as a 3'-phosphoadenylyl sulfate:adenosine 3',5'-bisphosphate antiporter at the Golgi membranes. Mediates the transport from the cytosol into the lumen of the Golgi of 3'-phosphoadenylyl sulfate/adenosine 3'-phospho 5'-phosphosulfate (PAPS), a universal sulfuryl donor for sulfation events that take place in that compartment. This is Adenosine 3'-phospho 5'-phosphosulfate transporter 2 from Mus musculus (Mouse).